Consider the following 126-residue polypeptide: Fluoride-specific ion channel FluC (126 aa).

Transmembrane regions (helical) follow at residues 2–22, 37–57, 65–85, and 101–121; these read LTFA…GAWL, WGTL…VALI, AWIR…FSTF, and AAAY…LATV. G77 and T80 together coordinate Na(+).

Belongs to the fluoride channel Fluc/FEX (TC 1.A.43) family.

The protein resides in the cell inner membrane. It catalyses the reaction fluoride(in) = fluoride(out). Its activity is regulated as follows. Na(+) is not transported, but it plays an essential structural role and its presence is essential for fluoride channel function. Fluoride-specific ion channel. Important for reducing fluoride concentration in the cell, thus reducing its toxicity. The chain is Fluoride-specific ion channel FluC from Bordetella parapertussis (strain 12822 / ATCC BAA-587 / NCTC 13253).